The primary structure comprises 228 residues: DNA-3-methyladenine glycosylase 1 (228 aa).

The Proton acceptor role is filled by Asp-170.

This sequence belongs to the alkylbase DNA glycosidase AlkA family.

It carries out the reaction Hydrolysis of alkylated DNA, releasing 3-methyladenine, 3-methylguanine, 7-methylguanine and 7-methyladenine.. Hydrolysis of the deoxyribose N-glycosidic bond to excise 3-methyladenine or 7-methyladenine from the damaged DNA polymer formed by alkylation lesions. Can release ethylated and propylated bases from DNA in addition to 3-methyladenine. The protein is DNA-3-methyladenine glycosylase 1 (mag1) of Schizosaccharomyces pombe (strain 972 / ATCC 24843) (Fission yeast).